We begin with the raw amino-acid sequence, 133 residues long: Helix-loop-helix protein 1 (133 aa).

Residues 1–79 (MMLNSDTMEL…RRATAKYRTA (79 aa)) are disordered. The segment covering 25 to 45 (DCGGGAGPDGAGPGGPGGGQA) has biased composition (gly residues). Basic and acidic residues predominate over residues 52–65 (EPGRKDLQHLSREE). The span at 66 to 79 (RRRRRRATAKYRTA) shows a compositional bias: basic residues. Positions 75 to 127 (KYRTAHATRERIRVEAFNLAFAELRKLLPTLPPDKKLSKIEILRLAICYISYL) constitute a bHLH domain.

In terms of assembly, efficient DNA binding requires dimerization with another bHLH protein.

It is found in the nucleus. Its function is as follows. May serve as DNA-binding protein and may be involved in the control of cell-type determination, possibly within the developing nervous system. This is Helix-loop-helix protein 1 (NHLH1) from Homo sapiens (Human).